The primary structure comprises 795 residues: Myosin light chain kinase 3 (795 aa).

A Phosphoserine modification is found at Ser-155. 2 disordered regions span residues 236-257 (GPGQ…ASEN) and 305-328 (SSGP…GDAL). Ser-351 and Ser-432 each carry phosphoserine. Residues 367–452 (DQIPKGARPF…GPGRTEAGRL (86 aa)) are disordered. The Protein kinase domain maps to 491–746 (VSQHEVLGGG…ATQCLKHEWL (256 aa)). ATP-binding positions include 497-505 (LGGGRFGQV) and Lys-520. Catalysis depends on Asp-612, which acts as the Proton acceptor.

It belongs to the protein kinase superfamily. CAMK Ser/Thr protein kinase family. Mg(2+) serves as cofactor. Phosphorylated on serine residues. Restricted to cardiomyocytes (at protein level). Down-regulated in heart after experimental myocardial infarction at the protein level; no significant changes at the mRNA level.

Its subcellular location is the cytoplasm. The catalysed reaction is L-seryl-[myosin light chain] + ATP = O-phospho-L-seryl-[myosin light chain] + ADP + H(+). It carries out the reaction L-threonyl-[myosin light chain] + ATP = O-phospho-L-threonyl-[myosin light chain] + ADP + H(+). Functionally, kinase that phosphorylates MYL2 in vitro. Has been proposed to be calmodulin-dependent, although MYL2 phosphorylation has also been observed in the presence or absence of calmodulin. Promotes sarcomere formation in cardiomyocytes and increases cardiomyocyte contractility. The polypeptide is Myosin light chain kinase 3 (Mylk3) (Mus musculus (Mouse)).